A 213-amino-acid polypeptide reads, in one-letter code: Orotate phosphoribosyltransferase (213 aa).

Residue lysine 26 coordinates 5-phospho-alpha-D-ribose 1-diphosphate. Position 34-35 (34-35) interacts with orotate; the sequence is FF. Residues 72–73, arginine 99, lysine 100, lysine 103, histidine 105, and 124–132 each bind 5-phospho-alpha-D-ribose 1-diphosphate; these read YK and DDVITAGTA. Residues threonine 128 and arginine 156 each coordinate orotate.

This sequence belongs to the purine/pyrimidine phosphoribosyltransferase family. PyrE subfamily. As to quaternary structure, homodimer. Mg(2+) is required as a cofactor.

It carries out the reaction orotidine 5'-phosphate + diphosphate = orotate + 5-phospho-alpha-D-ribose 1-diphosphate. It participates in pyrimidine metabolism; UMP biosynthesis via de novo pathway; UMP from orotate: step 1/2. Catalyzes the transfer of a ribosyl phosphate group from 5-phosphoribose 1-diphosphate to orotate, leading to the formation of orotidine monophosphate (OMP). The sequence is that of Orotate phosphoribosyltransferase from Salmonella typhi.